The chain runs to 64 residues: Ferredoxin-like protein in nif region (64 aa).

Residues 2–30 (AFKIIASQCTQCGACEFECPSNAIELKGE) form the 4Fe-4S ferredoxin-type domain. Residues Cys-10, Cys-13, Cys-16, Cys-20, Cys-39, Cys-42, Cys-51, and Cys-55 each contribute to the [4Fe-4S] cluster site.

The cofactor is [4Fe-4S] cluster.

This is Ferredoxin-like protein in nif region (fdxN) from Sinorhizobium fredii (strain NBRC 101917 / NGR234).